The sequence spans 147 residues: Large ribosomal subunit protein uL13 (147 aa).

It belongs to the universal ribosomal protein uL13 family. In terms of assembly, part of the 50S ribosomal subunit.

This protein is one of the early assembly proteins of the 50S ribosomal subunit, although it is not seen to bind rRNA by itself. It is important during the early stages of 50S assembly. The sequence is that of Large ribosomal subunit protein uL13 from Lactobacillus johnsonii (strain CNCM I-12250 / La1 / NCC 533).